The chain runs to 400 residues: Integumentary mucin A.1 (400 aa).

A signal peptide spans 1-20; that stretch reads MKHIILCIHFLLMVVGLGQA. P-type domains follow at residues 21 to 64 and 72 to 115; these read QDCS…FYNA and LECS…YART. Intrachain disulfides connect C23/C49, C33/C48, and C43/C60. A glycan (N-linked (GlcNAc...) asparagine) is linked at N63. 3 disulfides stabilise this stretch: C74/C100, C84/C99, and C94/C111. Composition is skewed to low complexity over residues 122 to 264 and 272 to 299; these read PDTT…DTTP and ETTT…ETTT. The segment at 122–302 is disordered; it reads PDTTTASTTA…TTTETTTAPP (181 aa). 14 consecutive repeat copies span residues 127 to 135, 136 to 144, 145 to 153, 154 to 162, 163 to 171, 172 to 180, 181 to 189, 190 to 198, 199 to 207, 208 to 216, 217 to 225, 226 to 234, 235 to 243, and 244 to 252. The segment at 127–261 is 15 X 9 AA approximate tandem repeats of [AV]-[SP]-T-T-[AP]-E-T-T-T; it reads ASTTAETTTV…TEPTTTPTTD (135 aa). One copy of the 1-15; approximate repeat lies at 253 to 261; that stretch reads EPTTTPTTD. 7 repeat units span residues 272 to 275, 276 to 279, 280 to 283, 284 to 287, 288 to 291, 292 to 295, and 296 to 299. Positions 272–299 are 7 X 4 AA repeats of E-T-T-T; that stretch reads ETTTETTTETTTETTTETTTETTTETTT. 2 consecutive P-type domains span residues 298 to 343 and 351 to 394; these read TTAP…FYTE and AECT…FEKA. 5 disulfide bridges follow: C312-C327, C322-C339, C353-C379, C363-C378, and C373-C390.

In terms of processing, extensively O-glycosylated. Consist of about 70% carbohydrate and 30% protein. In terms of tissue distribution, expressed and stored exclusively in mature mucous glands of the skin.

It is found in the secreted. Its function is as follows. Could be involved in defense against microbial infections. Protects the epithelia from external environment. The polypeptide is Integumentary mucin A.1 (Xenopus laevis (African clawed frog)).